Here is a 111-residue protein sequence, read N- to C-terminus: Antirepressor protein CarS (111 aa).

As to quaternary structure, monomer. Interacts with CarA and CarH.

Involved in carotenoid biosynthesis. Antagonizes the transcriptional repressor proteins CarA and CarH by preventing their binding to DNA. Can also dissociate preformed CarA-DNA complexes. Does not bind DNA. In Myxococcus xanthus, this protein is Antirepressor protein CarS (carS).